The sequence spans 591 residues: CTP synthase 1-A (591 aa).

Residues 300–554 (SIALVGKYTK…LASVGRLSQY (255 aa)) enclose the Glutamine amidotransferase type-1 domain. Catalysis depends on for GATase activity residues C399, H526, and E528.

Belongs to the CTP synthase family.

The catalysed reaction is UTP + L-glutamine + ATP + H2O = CTP + L-glutamate + ADP + phosphate + 2 H(+). It functions in the pathway pyrimidine metabolism; CTP biosynthesis via de novo pathway; CTP from UDP: step 2/2. Its function is as follows. This enzyme is involved in the de novo synthesis of CTP, a precursor of DNA, RNA and phospholipids. Catalyzes the ATP-dependent amination of UTP to CTP with either L-glutamine or ammonia as a source of nitrogen. The protein is CTP synthase 1-A (ctps1-a) of Xenopus laevis (African clawed frog).